Reading from the N-terminus, the 485-residue chain is MSIRYESVENLLTLIKDKKIKPSDVVKDIYDAIEETDPTIKSFLALDKENAIKKAQELDELQAKDQMDGKLFGIPMGIKDNIITNGLETTCASKMLEGFVPIYESTVMEKLHKENAVLIGKLNMDEFAMGGSTETSYFKKTVNPFDHKAVPGGSSGGSAAAVAAGLVPLSLGSDTGGSIRQPAAYCGVVGMKPTYGRVSRFGLVAFASSLDQIGPLTRNVKDNAIVLEAISGADVNDSTSAPVDDVDFTSEIGKDIKGLKVALPKEYLGEGVADDVKEAVQNAVETLKSLGAVVEEVSLPNTKFGIPSYYVIASSEASSNLSRFDGIRYGYHSKEAHSLEELYKMSRSEGFGKEVKRRIFLGTFALSSGYYDAYYKKSQKVRTLIKNDFDKVFENYDVVVGPTAPTTAFNLGEEIDDPLTMYANDLLTTPVNLAGLPGISVPCGQSNGRPIGLQFIGKPFDEKTLYRVAYQYETQYNLHDVYEKL.

Residues Lys-79 and Ser-154 each act as charge relay system in the active site. The active-site Acyl-ester intermediate is the Ser-178.

This sequence belongs to the amidase family. GatA subfamily. In terms of assembly, heterotrimer of A, B and C subunits.

It carries out the reaction L-glutamyl-tRNA(Gln) + L-glutamine + ATP + H2O = L-glutaminyl-tRNA(Gln) + L-glutamate + ADP + phosphate + H(+). In terms of biological role, allows the formation of correctly charged Gln-tRNA(Gln) through the transamidation of misacylated Glu-tRNA(Gln) in organisms which lack glutaminyl-tRNA synthetase. The reaction takes place in the presence of glutamine and ATP through an activated gamma-phospho-Glu-tRNA(Gln). In Staphylococcus aureus (strain Mu3 / ATCC 700698), this protein is Glutamyl-tRNA(Gln) amidotransferase subunit A.